A 184-amino-acid polypeptide reads, in one-letter code: Large ribosomal subunit protein uL15 (184 aa).

A disordered region spans residues 1–50 (MDLSSLRPAKGAVKNKKRVGRGQGSGNGTTAGKGNKGQQARSGYKRPINE). A compositionally biased stretch (gly residues) spans 21–35 (RGQGSGNGTTAGKGN).

It belongs to the universal ribosomal protein uL15 family. As to quaternary structure, part of the 50S ribosomal subunit.

In terms of biological role, binds to the 23S rRNA. The protein is Large ribosomal subunit protein uL15 of Chlorobium luteolum (strain DSM 273 / BCRC 81028 / 2530) (Pelodictyon luteolum).